The chain runs to 130 residues: MAASSSSFVPLVLLFLAIPVEPRPSMTRDEAQVLRALFGARLSSIISTPVNTDDIAELLPRRPGPPRSFGASPGALRGLTRGSEGGSRFLLDFLQQQSKTTRRGRSSMVGGRGCFGMKIDRIGSISGLGC.

Residues 1–22 form the signal peptide; sequence MAASSSSFVPLVLLFLAIPVEP. Residues 23–103 constitute a propeptide that is removed on maturation; the sequence is RPSMTRDEAQ…LQQQSKTTRR (81 aa). Positions 57–77 are disordered; sequence ELLPRRPGPPRSFGASPGALR. A disulfide bridge connects residues Cys-114 and Cys-130.

It belongs to the natriuretic peptide family.

The protein localises to the secreted. Functionally, exhibits natriuretic and vasodepressant activity. Has cGMP-stimulating activity. May help to regulate body fluid homeostasis in a variety of aquatic environments. This is C-type natriuretic peptide 2 from Takifugu rubripes (Japanese pufferfish).